Reading from the N-terminus, the 930-residue chain is Pyruvate dehydrogenase E1 component (930 aa).

The segment covering 1 to 10 (MTTDFARHDL) has biased composition (basic and acidic residues). The tract at residues 1-21 (MTTDFARHDLAQNSNSASEPD) is disordered. An Isoglutamyl lysine isopeptide (Lys-Gln) (interchain with Q-Cter in protein Pup) cross-link involves residue lysine 375.

Homodimer. Part of the PDH complex, consisting of multiple copies of AceE (E1), DlaT (E2) and Lpd (E3). It depends on Mg(2+) as a cofactor. Requires thiamine diphosphate as cofactor.

The enzyme catalyses N(6)-[(R)-lipoyl]-L-lysyl-[protein] + pyruvate + H(+) = N(6)-[(R)-S(8)-acetyldihydrolipoyl]-L-lysyl-[protein] + CO2. In terms of biological role, component of the pyruvate dehydrogenase (PDH) complex, that catalyzes the overall conversion of pyruvate to acetyl-CoA and CO(2). AceE has reductase activity with pyruvate but does not react with 2-oxoglutarate. In Mycobacterium tuberculosis (strain ATCC 25618 / H37Rv), this protein is Pyruvate dehydrogenase E1 component (aceE).